Reading from the N-terminus, the 310-residue chain is Metal ABC transporter substrate-binding lipoprotein ScbA (310 aa).

The signal sequence occupies residues 1 to 19 (MKKCRFLVLLLLAFVGLAA). Residue Cys-20 is the site of N-palmitoyl cysteine attachment. Residue Cys-20 is the site of S-diacylglycerol cysteine attachment. A divalent metal cation-binding residues include His-68, His-140, Glu-206, and Asp-281.

It belongs to the bacterial solute-binding protein 9 family.

The protein resides in the cell membrane. In terms of biological role, part of an ATP-binding cassette (ABC) transport system involved in metal import. Binds a metal with high affinity and specificity and delivers it to the membrane permease for translocation into the cytoplasm. Part of an ATP-driven transport system for manganese. Does not exhibit adhesion properties. The sequence is that of Metal ABC transporter substrate-binding lipoprotein ScbA (scbA) from Streptococcus cristatus.